The following is a 717-amino-acid chain: Catalase-peroxidase (717 aa).

The segment at methionine 1–lysine 20 is disordered. The span at glycine 11 to lysine 20 shows a compositional bias: polar residues. The tryptophyl-tyrosyl-methioninium (Trp-Tyr) (with M-245) cross-link spans tryptophan 91–tyrosine 219. Catalysis depends on histidine 92, which acts as the Proton acceptor. The tryptophyl-tyrosyl-methioninium (Tyr-Met) (with W-91) cross-link spans tyrosine 219 to methionine 245. Heme b is bound at residue histidine 260.

The protein belongs to the peroxidase family. Peroxidase/catalase subfamily. In terms of assembly, homodimer or homotetramer. It depends on heme b as a cofactor. Post-translationally, formation of the three residue Trp-Tyr-Met cross-link is important for the catalase, but not the peroxidase activity of the enzyme.

The enzyme catalyses H2O2 + AH2 = A + 2 H2O. It carries out the reaction 2 H2O2 = O2 + 2 H2O. In terms of biological role, bifunctional enzyme with both catalase and broad-spectrum peroxidase activity. The chain is Catalase-peroxidase from Chromohalobacter salexigens (strain ATCC BAA-138 / DSM 3043 / CIP 106854 / NCIMB 13768 / 1H11).